The chain runs to 397 residues: Sulfate adenylyltransferase (397 aa).

Belongs to the sulfate adenylyltransferase family.

It catalyses the reaction sulfate + ATP + H(+) = adenosine 5'-phosphosulfate + diphosphate. The protein operates within sulfur metabolism; hydrogen sulfide biosynthesis; sulfite from sulfate: step 1/3. This is Sulfate adenylyltransferase (sat) from Allochromatium vinosum (strain ATCC 17899 / DSM 180 / NBRC 103801 / NCIMB 10441 / D) (Chromatium vinosum).